The chain runs to 409 residues: AP-1-like transcription factor YAP2 (409 aa).

2 consecutive short sequence motifs (bipartite nuclear localization signal) follow at residues 17–24 (MKKQMLLN) and 47–54 (SRRTAQNR). Residues 26–64 (DGTPKRKVGRPGRKRIDSEAKSRRTAQNRAAQRAFRDRK) form a disordered region. The bZIP domain occupies 43 to 106 (SEAKSRRTAQ…KSLLSEITKY (64 aa)). The segment at 46–69 (KSRRTAQNRAAQRAFRDRKEAKMK) is basic motif. Residues 71–99 (LQERVELLEQKDAQNKTTTDFLLCSLKSL) are leucine-zipper. Residues 127-156 (QKRENEKGTSTAVSKAAKELPSPNSDENMT) form a disordered region. The tract at residues 356–387 (CYHILEEISSLPKYSSLDIDDLCSELIIKAKC) is c-CRD. Residues 372–379 (LDIDDLCS) carry the Nuclear export signal motif.

Belongs to the bZIP family. YAP subfamily. Homodimer; disulfide-linked, upon oxidation. Interacts in the nucleus with the nuclear export protein CRM1. Interacts with RCK1. Depending on the oxidative stress inducing agent, CAD1/YAP2 can undergo two distinct conformational changes, both through oxidation of cysteine residues, and both masking the nuclear export signal, thus abolishing nuclear export by CRM1/exportin 1. Peroxide stress induces the formation of possible intramolecular disulfide bonds as well as intermolcular disulfide within a homodimer. Cadmium may bind directly to specific cysteine residues (Cys-391 and either Cys-356 or Cys-387) in the c-CRD.

It is found in the cytoplasm. The protein resides in the nucleus. In terms of biological role, transcription activator involved in oxidative stress response and cadmium resistance. Regulates the transcription of genes overrepresented for the function of stabilizing proteins including the inducible Hsp90-family protein HSP82. Preferentially binds to promoters with the core binding site 5'-TTA[CG]TAA-3'. Activity of the transcription factor is controlled through oxidation of specific cysteine residues resulting in the alteration of its subcellular location. Activation by alkyl hydroperoxides or cadmium induces nuclear accumulation and as a result CAD1/YAP2 transcriptional activity. This Saccharomyces cerevisiae (strain ATCC 204508 / S288c) (Baker's yeast) protein is AP-1-like transcription factor YAP2.